Reading from the N-terminus, the 590-residue chain is L-erythrulose kinase (590 aa).

The DhaK domain occupies 7-331 (QPSSFARELT…WRAPADAPAF (325 aa)). H217 serves as the catalytic Tele-hemiaminal-histidine intermediate. Residues 366 to 568 (HCVAAALNAA…LAMILDAVSA (203 aa)) enclose the DhaL domain. ADP is bound by residues 398-401 (HGIG), 441-442 (TS), G483, R540, and 553-555 (DAG).

It carries out the reaction L-erythrulose + ATP = L-erythrulose 1-phosphate + ADP + H(+). It participates in carbohydrate metabolism. Involved in catabolism of D-apiose. Catalyzes the phosphorylation of L-erythrulose to L-erythrulose 1-phosphate. Can also phosphorylate D-erythrulose and dihydroxyacetone in vitro. The protein is L-erythrulose kinase of Pectobacterium atrosepticum (strain SCRI 1043 / ATCC BAA-672) (Erwinia carotovora subsp. atroseptica).